The chain runs to 207 residues: Large ribosomal subunit protein uL4 (207 aa).

The segment at 58 to 85 (AGSGKKPFKQKGTGQARQGCRRAPQYPG) is disordered.

It belongs to the universal ribosomal protein uL4 family. In terms of assembly, part of the 50S ribosomal subunit.

In terms of biological role, one of the primary rRNA binding proteins, this protein initially binds near the 5'-end of the 23S rRNA. It is important during the early stages of 50S assembly. It makes multiple contacts with different domains of the 23S rRNA in the assembled 50S subunit and ribosome. Its function is as follows. Forms part of the polypeptide exit tunnel. The sequence is that of Large ribosomal subunit protein uL4 from Geotalea uraniireducens (strain Rf4) (Geobacter uraniireducens).